We begin with the raw amino-acid sequence, 283 residues long: Thymidylate synthase (283 aa).

Arginine 22 contacts dUMP. The Nucleophile role is filled by cysteine 160. DUMP contacts are provided by residues 180 to 183 (RSCD), asparagine 191, and 221 to 223 (HIY). Aspartate 183 is a (6R)-5,10-methylene-5,6,7,8-tetrahydrofolate binding site. Serine 282 provides a ligand contact to (6R)-5,10-methylene-5,6,7,8-tetrahydrofolate.

Belongs to the thymidylate synthase family. Bacterial-type ThyA subfamily. As to quaternary structure, homodimer.

It localises to the cytoplasm. It carries out the reaction dUMP + (6R)-5,10-methylene-5,6,7,8-tetrahydrofolate = 7,8-dihydrofolate + dTMP. It participates in pyrimidine metabolism; dTTP biosynthesis. Its function is as follows. Catalyzes the reductive methylation of 2'-deoxyuridine-5'-monophosphate (dUMP) to 2'-deoxythymidine-5'-monophosphate (dTMP) while utilizing 5,10-methylenetetrahydrofolate (mTHF) as the methyl donor and reductant in the reaction, yielding dihydrofolate (DHF) as a by-product. This enzymatic reaction provides an intracellular de novo source of dTMP, an essential precursor for DNA biosynthesis. The chain is Thymidylate synthase from Mannheimia succiniciproducens (strain KCTC 0769BP / MBEL55E).